A 622-amino-acid chain; its full sequence is MPPTQAESVIRSIIREIGQECAAHGEIVSETLIAFMVKAVVLDPSNGFNMDRTLMKSDVQNLVKLCMTRLLDTKNPSLDTIKMQVYFDMNYTNRVEFLEEHHRVLESRLGSVTREITDNRACAKEELESLYRKIISYVLLRSGLGSPTDIKTVREVTAALQSVFPQAELGTFLTLSKKDKERQLKELTMIVTGIRLFNRDCGKGGEGIDDLPAVLHVAIPATMQHIDYQLETARSQVYRYTAILEKAANDPLMRAELQPYMLKEALYNIRQYEVFLQIILSDIITGAQEVEMMTKQLGAHLEQLKMTIKSKIAVPTSQVFPIFIALSTLWTSLQDETIVVGVLSNLFTHIQPFLGAHELYFPERVMQCHLNGATVKTDVCRMKEHMEDRVNVADFRKLEWLFPETTANFDKLLIQYRGFCAYTFAATDGLLLPGNPAIGILKYKEKYYTFNSKDAAYSFAENPEHYIDIVREKAKKNTELIQLLELHQQFETFIPYSQMRDADKHYIKPITKCESSTQTNTHILPPTIVRSYEWNEWELRRKAIKLANLRQKVTHSVQTDLSHLRRENCSQVYPPKDTSTQSMREDSTGVPRPQIYLAGLRGGKSEITDEVKVNLTRDVDET.

The tract at residues 570–592 (SQVYPPKDTSTQSMREDSTGVPR) is disordered.

This sequence belongs to the CFAP206 family.

Its subcellular location is the cytoplasm. The protein resides in the cytoskeleton. It localises to the cilium axoneme. The protein localises to the cilium basal body. In terms of biological role, essential for sperm motility and is involved in the regulation of the beating frequency of motile cilia on the epithelial cells of the respiratory tract. Required for the establishment of radial spokes in sperm flagella. This chain is Cilia- and flagella-associated protein 206, found in Homo sapiens (Human).